The primary structure comprises 425 residues: tRNA(Ile)-lysidine synthase (425 aa).

37 to 42 (SGGKDS) contributes to the ATP binding site.

It belongs to the tRNA(Ile)-lysidine synthase family.

Its subcellular location is the cytoplasm. The enzyme catalyses cytidine(34) in tRNA(Ile2) + L-lysine + ATP = lysidine(34) in tRNA(Ile2) + AMP + diphosphate + H(+). Its function is as follows. Ligates lysine onto the cytidine present at position 34 of the AUA codon-specific tRNA(Ile) that contains the anticodon CAU, in an ATP-dependent manner. Cytidine is converted to lysidine, thus changing the amino acid specificity of the tRNA from methionine to isoleucine. The sequence is that of tRNA(Ile)-lysidine synthase from Leptospira borgpetersenii serovar Hardjo-bovis (strain JB197).